Here is a 222-residue protein sequence, read N- to C-terminus: 7-cyano-7-deazaguanine synthase (222 aa).

Position 7–17 (7–17 (LSGGLDSSTVL)) interacts with ATP. Zn(2+) contacts are provided by cysteine 191, cysteine 199, cysteine 202, and cysteine 205.

This sequence belongs to the QueC family. Requires Zn(2+) as cofactor.

It catalyses the reaction 7-carboxy-7-deazaguanine + NH4(+) + ATP = 7-cyano-7-deazaguanine + ADP + phosphate + H2O + H(+). The protein operates within purine metabolism; 7-cyano-7-deazaguanine biosynthesis. Functionally, catalyzes the ATP-dependent conversion of 7-carboxy-7-deazaguanine (CDG) to 7-cyano-7-deazaguanine (preQ(0)). This is 7-cyano-7-deazaguanine synthase from Trichodesmium erythraeum (strain IMS101).